The sequence spans 29 residues: Cytochrome b6-f complex subunit 8 (29 aa).

A helical membrane pass occupies residues 3 to 23; the sequence is IVSLAWAVLMVVFTFSLSLVV.

It belongs to the PetN family. The 4 large subunits of the cytochrome b6-f complex are cytochrome b6, subunit IV (17 kDa polypeptide, PetD), cytochrome f and the Rieske protein, while the 4 small subunits are PetG, PetL, PetM and PetN. The complex functions as a dimer.

It localises to the plastid. The protein localises to the chloroplast thylakoid membrane. Component of the cytochrome b6-f complex, which mediates electron transfer between photosystem II (PSII) and photosystem I (PSI), cyclic electron flow around PSI, and state transitions. The protein is Cytochrome b6-f complex subunit 8 of Drimys granadensis.